Reading from the N-terminus, the 1227-residue chain is Multifunctional 2-oxoglutarate metabolism enzyme (1227 aa).

Residues 1-41 (MSSSPSPFGQNEWLVEEMYRKFRDDPSSVDPSWHEFLVDYS) are 2-oxoglutarate dehydrogenase E1, N-terminal part. Residues 23-37 (RDDPSSVDPSWHEFL) show a composition bias toward basic and acidic residues. The tract at residues 23-102 (RDDPSSVDPS…SATPAKGDES (80 aa)) is disordered. Residues 42-88 (PEPTTDSASNGRTTTAAPVTPPTPAPAPAPEPKAAPKPAAKTEAKPA) form a linker region. Positions 43-53 (EPTTDSASNGR) are enriched in polar residues. Residues 60–76 (VTPPTPAPAPAPEPKAA) show a composition bias toward pro residues. Residues 88 to 97 (AKPAKSATPA) are compositionally biased toward low complexity. The interval 89 to 335 (KPAKSATPAK…LRTIHQLLLD (247 aa)) is succinyltransferase E2. Residue His314 is the Proton acceptor; for succinyltransferase activity of the active site. The tract at residues 336–1227 (DDFFDEIFRE…QQEILDTAFG (892 aa)) is 2-oxoglutarate dehydrogenase E1, C-terminal part. Arg540 serves as a coordination point for thiamine diphosphate. 2 residues coordinate 2-oxoglutarate: His579 and Ser604. Positions 604, 606, 645, 646, 647, and 678 each coordinate thiamine diphosphate. Asp645 serves as a coordination point for Mg(2+). The Mg(2+) site is built by Asn678 and Ile680. The stretch at 783–814 (DISMKEAEDALRDYQGQLERVFNEVRELEKHE) forms a coiled coil. His1020 lines the 2-oxoglutarate pocket. 7 residues coordinate acetyl-CoA: Thr1038, Arg1054, Lys1089, Ser1092, Gln1142, Arg1149, and Arg1150.

This sequence belongs to the 2-oxoacid dehydrogenase family. Kgd subfamily. In terms of assembly, homodimer. Interacts with the FHA domain of unphosphorylated GarA. The 2-oxoglutarate dehydrogenase (ODH) complex contains multiple copies of three enzymatic components: 2-oxoglutarate dehydrogenase (E1), dihydrolipoamide succinyltransferase (E2) and lipoamide dehydrogenase (E3). Mg(2+) serves as cofactor. It depends on thiamine diphosphate as a cofactor.

The catalysed reaction is glyoxylate + 2-oxoglutarate + H(+) = 2-hydroxy-3-oxoadipate + CO2. It catalyses the reaction 2-oxoglutarate + H(+) = succinate semialdehyde + CO2. It carries out the reaction N(6)-[(R)-lipoyl]-L-lysyl-[protein] + 2-oxoglutarate + H(+) = N(6)-[(R)-S(8)-succinyldihydrolipoyl]-L-lysyl-[protein] + CO2. The enzyme catalyses N(6)-[(R)-dihydrolipoyl]-L-lysyl-[protein] + succinyl-CoA = N(6)-[(R)-S(8)-succinyldihydrolipoyl]-L-lysyl-[protein] + CoA. The protein operates within carbohydrate metabolism; tricarboxylic acid cycle; succinate from 2-oxoglutarate (transferase route): step 1/2. Its pathway is carbohydrate metabolism; tricarboxylic acid cycle; succinyl-CoA from 2-oxoglutarate (dehydrogenase route): step 1/1. With respect to regulation, alpha-ketoglutarate dehydrogenase and decarboxylase activities are inhibited by unphosphorylated GarA, and allosterically activated by acetyl-CoA, the main substrate of the TCA cycle. Both the phosphoadenosine and acetyl moieties of acetyl-CoA are important for activation because neither CoA nor the synthetic compound S-(2-acetamidoethyl)-ethanethioate (which mimics the terminal acetyl-phosphopantetheine group of acetyl-CoA) has an activation effect. Functionally, shows three enzymatic activities that share a first common step, the attack of thiamine-PP on 2-oxoglutarate (alpha-ketoglutarate, KG), leading to the formation of an enamine-thiamine-PP intermediate upon decarboxylation. Thus, displays KGD activity, catalyzing the decarboxylation from five-carbon 2-oxoglutarate to four-carbon succinate semialdehyde (SSA). Also catalyzes C-C bond formation between the activated aldehyde formed after decarboxylation of alpha-ketoglutarate and the carbonyl of glyoxylate (GLX), to yield 2-hydroxy-3-oxoadipate (HOA), which spontaneously decarboxylates to form 5-hydroxylevulinate (HLA). And is also a component of the 2-oxoglutarate dehydrogenase (ODH) complex, that catalyzes the overall conversion of 2-oxoglutarate to succinyl-CoA and CO(2). The KG decarboxylase and KG dehydrogenase reactions provide two alternative, tightly regulated, pathways connecting the oxidative and reductive branches of the TCA cycle. The polypeptide is Multifunctional 2-oxoglutarate metabolism enzyme (kgd) (Mycolicibacterium smegmatis (strain ATCC 700084 / mc(2)155) (Mycobacterium smegmatis)).